Reading from the N-terminus, the 706-residue chain is Termination factor NPH-I homolog (706 aa).

Residues 62–227 (IGQGENTRGL…VPCFNMLSGR (166 aa)) form the Helicase ATP-binding domain. Position 75 to 82 (75 to 82 (HQMGMGKT)) interacts with ATP. The DEAH box signature appears at 168–171 (DEAH). Residues 417–599 (QCLQPLKVLE…HLNSAFRDLL (183 aa)) enclose the Helicase C-terminal domain.

This sequence belongs to the DEAD box helicase family. DEAH subfamily. As to quaternary structure, part of the viral DNA-directed RNA polymerase that consists of 8 polII-like subunits (RPB1, RPB2, RPB3, RPB5, RPB6, RPB7, RPB9, RPB10), a capping enzyme and a termination factor.

Its subcellular location is the virion. Its function is as follows. Putative DNA-dependent ATPase required for providing the needed energy to achieve the termination of early transcripts. The chain is Termination factor NPH-I homolog from Ornithodoros (relapsing fever ticks).